Here is a 242-residue protein sequence, read N- to C-terminus: DnaJ homolog subfamily B member 3 (242 aa).

The 69-residue stretch at 1–69 (MVDYYEVLGV…RKREVYDRCG (69 aa)) folds into the J domain.

As to expression, testis specific. Expression is confined to the germline without any contribution of the somatic components.

Its function is as follows. May operate as a co-chaperone of the male germ cell- and haploid stage-specific Hsp70 proteins. The protein is DnaJ homolog subfamily B member 3 (Dnajb3) of Mus musculus (Mouse).